The following is an 88-amino-acid chain: Toxin RelE2 (88 aa).

Belongs to the RelE toxin family.

Functionally, toxic component of a type II toxin-antitoxin (TA) system. Its toxic effect is neutralized by coexpression with cognate antitoxin RelB2 but no other ParD or RelB antitoxin. In Caulobacter vibrioides (strain ATCC 19089 / CIP 103742 / CB 15) (Caulobacter crescentus), this protein is Toxin RelE2 (relE2).